The sequence spans 251 residues: UPF0309 protein SAV_3856 (251 aa).

One can recognise an SIS domain in the interval 36 to 220 (IADTVADGGR…AGTLADRGIE (185 aa)).

It belongs to the UPF0309 family.

In Streptomyces avermitilis (strain ATCC 31267 / DSM 46492 / JCM 5070 / NBRC 14893 / NCIMB 12804 / NRRL 8165 / MA-4680), this protein is UPF0309 protein SAV_3856.